Here is a 64-residue protein sequence, read N- to C-terminus: Neurotoxin BmK-II (64 aa).

The region spanning 2-64 (RDAYIAKPHN…VPIRIPGNCH (63 aa)) is the LCN-type CS-alpha/beta domain. 4 disulfide bridges follow: cysteine 12-cysteine 63, cysteine 16-cysteine 36, cysteine 22-cysteine 46, and cysteine 26-cysteine 48.

It belongs to the long (4 C-C) scorpion toxin superfamily. Sodium channel inhibitor family. Alpha subfamily. In terms of tissue distribution, expressed by the venom gland.

It is found in the secreted. Its function is as follows. Binds to sodium channels (Nav) and inhibits the inactivation of the activated channels, thereby blocking neuronal transmission. This toxin is active against mammals and insects. BmK-II is 6-fold less toxic than BmK-I. This is Neurotoxin BmK-II from Olivierus martensii (Manchurian scorpion).